A 259-amino-acid chain; its full sequence is tRNA (guanine-N(7)-)-methyltransferase (259 aa).

Basic and acidic residues predominate over residues 1 to 11 (MSNTDNSDKNT). Residues 1–29 (MSNTDNSDKNTKPTGYRPPQTDFNTEFGN) form a disordered region. Positions 89, 114, 141, and 164 each coordinate S-adenosyl-L-methionine. Residue aspartate 164 is part of the active site. Substrate-binding positions include lysine 168, aspartate 200, and 238–241 (TKFE).

This sequence belongs to the class I-like SAM-binding methyltransferase superfamily. TrmB family.

It carries out the reaction guanosine(46) in tRNA + S-adenosyl-L-methionine = N(7)-methylguanosine(46) in tRNA + S-adenosyl-L-homocysteine. Its pathway is tRNA modification; N(7)-methylguanine-tRNA biosynthesis. Its function is as follows. Catalyzes the formation of N(7)-methylguanine at position 46 (m7G46) in tRNA. This is tRNA (guanine-N(7)-)-methyltransferase from Corynebacterium diphtheriae (strain ATCC 700971 / NCTC 13129 / Biotype gravis).